Reading from the N-terminus, the 314-residue chain is MIFDGFIKNFIYDPVSFIGILIFYFLLINLPISLISLFNKKSSSYVRLITILINLFIALQLISRWIISGHFPISNLYESLYFLVWGITLGQLLIEKEYSTPIIPAIAIPIELLTIAFACFVLPEDLKLSSNLVPALRSSWLVMHVSVVMLSYAALIMGSLLSASVLFINNSQPLQLRSSSMGVGGFKISNSYSTNNVIEPINFSHSEELDTLSYRSILVGFVLLTLGLITGAIWANEAWGTWWSWDPKETWAFISWLFYAAYLHMRISRGWQGRRPALLATSGFFVVLICYIGVNFLGVGLHSYGWIFGIFNLF.

The next 8 helical transmembrane spans lie at V15 to I35, L48 to S68, I73 to L93, I102 to L122, V148 to I168, S216 to N236, T250 to I267, and A277 to L297.

It belongs to the CcmF/CycK/Ccl1/NrfE/CcsA family. May interact with ccs1.

It is found in the cellular thylakoid membrane. Its function is as follows. Required during biogenesis of c-type cytochromes (cytochrome c6 and cytochrome f) at the step of heme attachment. The polypeptide is Cytochrome c biogenesis protein CcsA (Prochlorococcus marinus subsp. pastoris (strain CCMP1986 / NIES-2087 / MED4)).